We begin with the raw amino-acid sequence, 430 residues long: Gamma-glutamyl phosphate reductase (430 aa).

It belongs to the gamma-glutamyl phosphate reductase family.

It localises to the cytoplasm. The catalysed reaction is L-glutamate 5-semialdehyde + phosphate + NADP(+) = L-glutamyl 5-phosphate + NADPH + H(+). The protein operates within amino-acid biosynthesis; L-proline biosynthesis; L-glutamate 5-semialdehyde from L-glutamate: step 2/2. Its function is as follows. Catalyzes the NADPH-dependent reduction of L-glutamate 5-phosphate into L-glutamate 5-semialdehyde and phosphate. The product spontaneously undergoes cyclization to form 1-pyrroline-5-carboxylate. This Rhodopseudomonas palustris (strain HaA2) protein is Gamma-glutamyl phosphate reductase.